The sequence spans 727 residues: Malate synthase G (727 aa).

Residues valine 117, 124–125, serine 275, and arginine 312 each bind acetyl-CoA; that span reads RY. Arginine 339 (proton acceptor) is an active-site residue. Glyoxylate contacts are provided by residues arginine 339, glutamate 431, and 456–459; that span reads GFLD. Positions 431 and 459 each coordinate Mg(2+). Proline 540 is an acetyl-CoA binding site. Cysteine 616 is modified (cysteine sulfenic acid (-SOH)). Residue aspartate 630 is the Proton donor of the active site.

The protein belongs to the malate synthase family. GlcB subfamily. In terms of assembly, monomer. It depends on Mg(2+) as a cofactor.

It is found in the cytoplasm. The catalysed reaction is glyoxylate + acetyl-CoA + H2O = (S)-malate + CoA + H(+). It participates in carbohydrate metabolism; glyoxylate cycle; (S)-malate from isocitrate: step 2/2. In terms of biological role, involved in the glycolate utilization. Catalyzes the condensation and subsequent hydrolysis of acetyl-coenzyme A (acetyl-CoA) and glyoxylate to form malate and CoA. The polypeptide is Malate synthase G (Halalkalibacterium halodurans (strain ATCC BAA-125 / DSM 18197 / FERM 7344 / JCM 9153 / C-125) (Bacillus halodurans)).